A 350-amino-acid chain; its full sequence is UBX domain-containing protein 2B (350 aa).

Residues 1 to 29 show a composition bias toward acidic residues; it reads MEERENSEEGDDGAGEEEEEDQGSGEDGG. The tract at residues 1–46 is disordered; it reads MEERENSEEGDDGAGEEEEEDQGSGEDGGEVGAEREQEAELKDSLR. The span at 32-45 shows a compositional bias: basic and acidic residues; sequence GAEREQEAELKDSL. The SEP domain maps to 160–225; it reads EIQILLKLWS…MEDHQDQEYI (66 aa). In terms of domain architecture, UBX spans 271–348; the sequence is EHVPTTKIQI…DILNTVILQR (78 aa).

Belongs to the NSFL1C family.

The protein resides in the nucleus. Its subcellular location is the cytoplasm. It is found in the cytosol. The protein localises to the endoplasmic reticulum. It localises to the golgi apparatus. The protein resides in the cytoskeleton. Its subcellular location is the microtubule organizing center. It is found in the centrosome. Its function is as follows. Adapter protein required for Golgi and endoplasmic reticulum biogenesis. Involved in Golgi and endoplasmic reticulum maintenance during interphase and in their reassembly at the end of mitosis. Regulates the centrosomal levels of kinase aurka-a/Aurora A during mitotic progression by promoting aurka-a removal from centrosomes in prophase. Also, regulates spindle orientation during mitosis. This chain is UBX domain-containing protein 2B (ubxn2b), found in Xenopus laevis (African clawed frog).